Reading from the N-terminus, the 422-residue chain is FAD-dependent monooxygenase ptmM (422 aa).

The helical transmembrane segment at 8-24 threads the bilayer; sequence VIIVGGSIAGLTLAHCL. Residues Glu35, Gly49, Arg108, Asp308, and Ala321 each contribute to the FAD site.

Belongs to the paxM FAD-dependent monooxygenase family. Requires FAD as cofactor.

The protein resides in the membrane. The protein operates within secondary metabolite biosynthesis. Functionally, FAD-dependent monooxygenase; part of the gene cluster that mediates the biosynthesis of the indole diterpenes penitrems. The geranylgeranyl diphosphate (GGPP) synthase ptmG catalyzes the first step in penitrem biosynthesis via conversion of farnesyl pyrophosphate and isopentyl pyrophosphate into geranylgeranyl pyrophosphate (GGPP). Condensation of indole-3-glycerol phosphate with GGPP by the prenyl transferase ptmC then forms 3-geranylgeranylindole (3-GGI). Epoxidation by the FAD-dependent monooxygenase ptmM leads to a epoxidized-GGI that is substrate of the terpene cyclase ptmB for cyclization to yield paspaline. Paspaline is subsequently converted to 13-desoxypaxilline by the cytochrome P450 monooxygenase ptmP, the latter being then converted to paxilline by the cytochrome P450 monooxygenase ptmQ. Paxilline is converted to beta-paxitriol via C-10 ketoreduction by the short-chain dehydrogenase ptmH which can be monoprenylated at the C-20 by the indole diterpene prenyltransferase ptmD. A two-step elimination (acetylation and elimination) process performed by the O-acetyltransferase ptmV and ptmI leads to the production of the prenylated form of penijanthine. The FAD-linked oxidoreductase ptmO then converts the prenylated form of penijanthine into PC-M5 which is in turn transformed into PC-M4 by the aromatic dimethylallyltransferase ptmE. Five sequential oxidative transformations performed by the cytochrome P450 monooxygenases ptmK, ptmU, ptmL, ptmN and ptmJ yield the various penitrem compounds. PtmK, ptmU and ptmM are involved in the formation of the key bicyclic ring of penitrem C via the formation of the intermediates secopenitrem D and penitrem D. PtmL catalyzes the epoxidation of penitrem D and C to yield penitrem B and F, respectively. PtmJ catalyzes the last benzylic hydroxylation to convert penitrem B to prenitrem E and penitrem F to penitrem A. This Penicillium ochrochloron protein is FAD-dependent monooxygenase ptmM.